The sequence spans 435 residues: ATP-dependent protease ATPase subunit HslU (435 aa).

ATP contacts are provided by residues Val-18, 60–65 (GVGKTE), Asp-248, Glu-313, and Arg-385.

This sequence belongs to the ClpX chaperone family. HslU subfamily. In terms of assembly, a double ring-shaped homohexamer of HslV is capped on each side by a ring-shaped HslU homohexamer. The assembly of the HslU/HslV complex is dependent on binding of ATP.

The protein resides in the cytoplasm. ATPase subunit of a proteasome-like degradation complex; this subunit has chaperone activity. The binding of ATP and its subsequent hydrolysis by HslU are essential for unfolding of protein substrates subsequently hydrolyzed by HslV. HslU recognizes the N-terminal part of its protein substrates and unfolds these before they are guided to HslV for hydrolysis. The chain is ATP-dependent protease ATPase subunit HslU from Xanthobacter autotrophicus (strain ATCC BAA-1158 / Py2).